The following is a 375-amino-acid chain: Zinc finger CCCH domain-containing protein 57 (375 aa).

C3H1-type zinc fingers lie at residues 42–70 (RHGE…HPHD), 87–115 (RIGQ…HPRN), 133–161 (RPNE…HPQT), 243–271 (RPGQ…HPRD), and 289–317 (RPGE…HPMR). The disordered stretch occupies residues 352–375 (SVEAKPTSLPETTSAKDTIVDAQH).

The protein localises to the nucleus. The sequence is that of Zinc finger CCCH domain-containing protein 57 (ZFN3) from Arabidopsis thaliana (Mouse-ear cress).